The chain runs to 459 residues: Exodeoxyribonuclease 7 large subunit (459 aa).

It belongs to the XseA family. Heterooligomer composed of large and small subunits.

It localises to the cytoplasm. The enzyme catalyses Exonucleolytic cleavage in either 5'- to 3'- or 3'- to 5'-direction to yield nucleoside 5'-phosphates.. In terms of biological role, bidirectionally degrades single-stranded DNA into large acid-insoluble oligonucleotides, which are then degraded further into small acid-soluble oligonucleotides. This Pseudomonas aeruginosa (strain LESB58) protein is Exodeoxyribonuclease 7 large subunit.